Consider the following 90-residue polypeptide: UPF0237 protein BL1209.1 (90 aa).

The ACT domain occupies 5–79; the sequence is IITVVGQDTV…DDIGVRIRCQ (75 aa).

It belongs to the UPF0237 family.

The chain is UPF0237 protein BL1209.1 from Bifidobacterium longum (strain NCC 2705).